A 205-amino-acid polypeptide reads, in one-letter code: MANTLFDRTIAFAGICQAASLVQKMAKDGHCDQEAFDTAIQSILETNPSNTVAVYGKESNLRIGLECLVRDFDNTPSGSELTRYLISLMALERKLAGHRDGMSKLGERIGTIERQLEHFDIHDEQMLSNIASIYLDVISPMGPRIQVTGTPSVLQQPMTQHKVRALLLSGIRSAVLWRQVGGKRRHLIFGRKKMVEQAKIILAQI.

The protein belongs to the HflD family.

Its subcellular location is the cytoplasm. The protein resides in the cell inner membrane. The sequence is that of High frequency lysogenization protein HflD homolog from Aliivibrio fischeri (strain ATCC 700601 / ES114) (Vibrio fischeri).